We begin with the raw amino-acid sequence, 107 residues long: U1-lycotoxin-Ls1x (107 aa).

Positions 1 to 20 (MMKVLVVVALLVTLISYSSS) are cleaved as a signal peptide. The propeptide occupies 21-41 (EGIDDLEADELLSLMANEHPR). Intrachain disulfides connect cysteine 44/cysteine 59, cysteine 51/cysteine 68, cysteine 58/cysteine 86, and cysteine 70/cysteine 84.

It belongs to the neurotoxin 19 (CSTX) family. 04 (U1-Lctx) subfamily. Expressed by the venom gland.

It localises to the secreted. In Lycosa singoriensis (Wolf spider), this protein is U1-lycotoxin-Ls1x.